The sequence spans 485 residues: MTRTQEPLPTVAAPKVGFISLGCPKALVDSERILTQLRAEGYEVAPNYEDAQAVIVNTCGFITPAVEESLSAIGEALDATGKVIVTGCLGERPEKILERHPKVAAITGSEAVDDVMAHVRELLPIELDPFTGLLPVAAPGMRQGDTLAPSVKLTPRHYAYVKIAEGCNHTCSFCIIPKLRGRQVSRDAGAVLYEAYRLIAGGTKELMIISQDTSAYGVDLRHRTSEFQGEQVRAHLIDLAEKLGEMGAWVRMHYVYPYPHVERIVELMSQGKILPYLDVPLQHASPAVLKRMRRPGAGKQLDTIRRWREICPELVIRSTFIVGFPGETEEDFQLLLDFLEEARLDRVGAFTYSDVEEADANALDGAIPEEVKQERLARFMEVAQRISREKLAEKVGRVLDVIIDEFNDDEGDEPGTRLIGRTKGDAPGIDGQVYLYAGDFAGQVKIGDIVQARIEDSDEYDLYGEVIHTPEWRPNVPLLGHFGKH.

The 111-residue stretch at proline 14–proline 124 folds into the MTTase N-terminal domain. The [4Fe-4S] cluster site is built by cysteine 23, cysteine 59, cysteine 88, cysteine 167, cysteine 171, and cysteine 174. Residues leucine 153–glutamate 389 enclose the Radical SAM core domain. Positions alanine 392–histidine 468 constitute a TRAM domain.

The protein belongs to the methylthiotransferase family. RimO subfamily. Requires [4Fe-4S] cluster as cofactor.

The protein resides in the cytoplasm. It carries out the reaction L-aspartate(89)-[ribosomal protein uS12]-hydrogen + (sulfur carrier)-SH + AH2 + 2 S-adenosyl-L-methionine = 3-methylsulfanyl-L-aspartate(89)-[ribosomal protein uS12]-hydrogen + (sulfur carrier)-H + 5'-deoxyadenosine + L-methionine + A + S-adenosyl-L-homocysteine + 2 H(+). Catalyzes the methylthiolation of an aspartic acid residue of ribosomal protein uS12. This Deinococcus geothermalis (strain DSM 11300 / CIP 105573 / AG-3a) protein is Ribosomal protein uS12 methylthiotransferase RimO.